The sequence spans 121 residues: Ribosome-binding factor A (121 aa).

Belongs to the RbfA family. As to quaternary structure, monomer. Binds 30S ribosomal subunits, but not 50S ribosomal subunits or 70S ribosomes.

It is found in the cytoplasm. Functionally, one of several proteins that assist in the late maturation steps of the functional core of the 30S ribosomal subunit. Associates with free 30S ribosomal subunits (but not with 30S subunits that are part of 70S ribosomes or polysomes). Required for efficient processing of 16S rRNA. May interact with the 5'-terminal helix region of 16S rRNA. The protein is Ribosome-binding factor A of Oenococcus oeni (strain ATCC BAA-331 / PSU-1).